A 328-amino-acid polypeptide reads, in one-letter code: Lipoyl synthase (328 aa).

Positions 75, 80, 86, 101, 105, 108, and 315 each coordinate [4Fe-4S] cluster. The Radical SAM core domain occupies 87–304; sequence FNHGTATFMI…EREAKKMGYE (218 aa).

It belongs to the radical SAM superfamily. Lipoyl synthase family. [4Fe-4S] cluster is required as a cofactor.

It is found in the cytoplasm. It catalyses the reaction [[Fe-S] cluster scaffold protein carrying a second [4Fe-4S](2+) cluster] + N(6)-octanoyl-L-lysyl-[protein] + 2 oxidized [2Fe-2S]-[ferredoxin] + 2 S-adenosyl-L-methionine + 4 H(+) = [[Fe-S] cluster scaffold protein] + N(6)-[(R)-dihydrolipoyl]-L-lysyl-[protein] + 4 Fe(3+) + 2 hydrogen sulfide + 2 5'-deoxyadenosine + 2 L-methionine + 2 reduced [2Fe-2S]-[ferredoxin]. It participates in protein modification; protein lipoylation via endogenous pathway; protein N(6)-(lipoyl)lysine from octanoyl-[acyl-carrier-protein]: step 2/2. Functionally, catalyzes the radical-mediated insertion of two sulfur atoms into the C-6 and C-8 positions of the octanoyl moiety bound to the lipoyl domains of lipoate-dependent enzymes, thereby converting the octanoylated domains into lipoylated derivatives. This chain is Lipoyl synthase, found in Colwellia psychrerythraea (strain 34H / ATCC BAA-681) (Vibrio psychroerythus).